The primary structure comprises 483 residues: Glutamate--tRNA ligase (483 aa).

The short motif at 11–21 is the 'HIGH' region element; the sequence is PSPTGHLHIGN. C108, C110, H135, and D137 together coordinate Zn(2+). The 'KMSKS' region motif lies at 252 to 256; sequence KLSKR. K255 lines the ATP pocket.

The protein belongs to the class-I aminoacyl-tRNA synthetase family. Glutamate--tRNA ligase type 1 subfamily. As to quaternary structure, monomer. The cofactor is Zn(2+).

The protein localises to the cytoplasm. It carries out the reaction tRNA(Glu) + L-glutamate + ATP = L-glutamyl-tRNA(Glu) + AMP + diphosphate. Catalyzes the attachment of glutamate to tRNA(Glu) in a two-step reaction: glutamate is first activated by ATP to form Glu-AMP and then transferred to the acceptor end of tRNA(Glu). This is Glutamate--tRNA ligase from Bacillus subtilis (strain 168).